We begin with the raw amino-acid sequence, 557 residues long: Membrane protein insertase YidC (557 aa).

Residues 3–23 form a helical membrane-spanning segment; that stretch reads NLRPVLYLSMLLVLFLIWQAW. Residues 34-60 are disordered; the sequence is APGAQEQVMDRDGVPAPPQDVPDAPVS. 4 helical membrane-spanning segments follow: residues 366–386, 436–456, 480–500, and 514–534; these read VVGN…LVFY, LGGC…YWVL, YFIL…LNPA, and PFVF…YWFV.

This sequence belongs to the OXA1/ALB3/YidC family. Type 1 subfamily. As to quaternary structure, interacts with the Sec translocase complex via SecD. Specifically interacts with transmembrane segments of nascent integral membrane proteins during membrane integration.

The protein localises to the cell inner membrane. Functionally, required for the insertion and/or proper folding and/or complex formation of integral membrane proteins into the membrane. Involved in integration of membrane proteins that insert both dependently and independently of the Sec translocase complex, as well as at least some lipoproteins. Aids folding of multispanning membrane proteins. This Thioalkalivibrio sulfidiphilus (strain HL-EbGR7) protein is Membrane protein insertase YidC.